Here is a 555-residue protein sequence, read N- to C-terminus: Potassium-transporting ATPase potassium-binding subunit (555 aa).

The next 10 helical transmembrane spans lie at 2 to 22 (IWVA…PTGI), 60 to 80 (QYAL…YFIF), 130 to 150 (IGIT…VMAF), 173 to 193 (VFLP…VPQT), 246 to 266 (MSNI…PFTY), 278 to 298 (ILFV…TTSE), 374 to 394 (AGFV…GLMV), 412 to 432 (LIAV…ALAL), 483 to 503 (LVMF…AASL), and 525 to 545 (GIFI…MLVL).

The protein belongs to the KdpA family. As to quaternary structure, the system is composed of three essential subunits: KdpA, KdpB and KdpC.

Its subcellular location is the cell membrane. In terms of biological role, part of the high-affinity ATP-driven potassium transport (or Kdp) system, which catalyzes the hydrolysis of ATP coupled with the electrogenic transport of potassium into the cytoplasm. This subunit binds the extracellular potassium ions and delivers the ions to the membrane domain of KdpB through an intramembrane tunnel. This Bacillus cereus (strain G9842) protein is Potassium-transporting ATPase potassium-binding subunit.